A 189-amino-acid chain; its full sequence is Xanthine phosphoribosyltransferase (189 aa).

Xanthine is bound by residues leucine 20 and asparagine 27. Residue 127-131 coordinates 5-phospho-alpha-D-ribose 1-diphosphate; sequence AYGNA. Residue lysine 155 coordinates xanthine.

This sequence belongs to the purine/pyrimidine phosphoribosyltransferase family. Xpt subfamily. As to quaternary structure, homodimer.

The protein localises to the cytoplasm. It carries out the reaction XMP + diphosphate = xanthine + 5-phospho-alpha-D-ribose 1-diphosphate. It functions in the pathway purine metabolism; XMP biosynthesis via salvage pathway; XMP from xanthine: step 1/1. Its function is as follows. Converts the preformed base xanthine, a product of nucleic acid breakdown, to xanthosine 5'-monophosphate (XMP), so it can be reused for RNA or DNA synthesis. The sequence is that of Xanthine phosphoribosyltransferase from Bacteroides fragilis (strain ATCC 25285 / DSM 2151 / CCUG 4856 / JCM 11019 / LMG 10263 / NCTC 9343 / Onslow / VPI 2553 / EN-2).